A 158-amino-acid chain; its full sequence is MAKKKKQNNPNSIAQNKKARFDYFIEETFEAGLALEGWEVKSLRQGKVQINESYILLKNNEAWLFGALITPLITASTHSNHDPLRLRKLLMHRREIDRLMGLVDQKGFTVVPLGLHWSKGKVKISIGLAKGKKLHDKRATQKERDWNRDKQRIMKYHA.

It belongs to the SmpB family.

The protein resides in the cytoplasm. Its function is as follows. Required for rescue of stalled ribosomes mediated by trans-translation. Binds to transfer-messenger RNA (tmRNA), required for stable association of tmRNA with ribosomes. tmRNA and SmpB together mimic tRNA shape, replacing the anticodon stem-loop with SmpB. tmRNA is encoded by the ssrA gene; the 2 termini fold to resemble tRNA(Ala) and it encodes a 'tag peptide', a short internal open reading frame. During trans-translation Ala-aminoacylated tmRNA acts like a tRNA, entering the A-site of stalled ribosomes, displacing the stalled mRNA. The ribosome then switches to translate the ORF on the tmRNA; the nascent peptide is terminated with the 'tag peptide' encoded by the tmRNA and targeted for degradation. The ribosome is freed to recommence translation, which seems to be the essential function of trans-translation. This Hydrogenovibrio crunogenus (strain DSM 25203 / XCL-2) (Thiomicrospira crunogena) protein is SsrA-binding protein.